The primary structure comprises 292 residues: Homoserine kinase (292 aa).

84-94 (PLARGMGSSSA) is an ATP binding site.

It belongs to the GHMP kinase family. Homoserine kinase subfamily.

Its subcellular location is the cytoplasm. The catalysed reaction is L-homoserine + ATP = O-phospho-L-homoserine + ADP + H(+). It participates in amino-acid biosynthesis; L-threonine biosynthesis; L-threonine from L-aspartate: step 4/5. In terms of biological role, catalyzes the ATP-dependent phosphorylation of L-homoserine to L-homoserine phosphate. The protein is Homoserine kinase of Thermus thermophilus (strain ATCC BAA-163 / DSM 7039 / HB27).